Here is a 178-residue protein sequence, read N- to C-terminus: MEQFHGTTIVSVRRGDKVALGGDGQVTLGNIVMKGGARKVRRIYNNQVLVGFAGGTADAFSLLDRFEAKLEKHQGNLTRAAVELAKDWRTDRMLRRLEAMLITADATTTLVITGNGDVLDPEEGICAIGSGGAYAQAAARALAENTELSPREIVEKSLEIAGDMCIYTNHNRIIETIE.

The active site involves Thr7. 3 residues coordinate Na(+): Gly162, Cys165, and Thr168.

Belongs to the peptidase T1B family. HslV subfamily. As to quaternary structure, a double ring-shaped homohexamer of HslV is capped on each side by a ring-shaped HslU homohexamer. The assembly of the HslU/HslV complex is dependent on binding of ATP.

It is found in the cytoplasm. The enzyme catalyses ATP-dependent cleavage of peptide bonds with broad specificity.. Allosterically activated by HslU binding. Its function is as follows. Protease subunit of a proteasome-like degradation complex believed to be a general protein degrading machinery. The protein is ATP-dependent protease subunit HslV of Burkholderia lata (strain ATCC 17760 / DSM 23089 / LMG 22485 / NCIMB 9086 / R18194 / 383).